Here is a 938-residue protein sequence, read N- to C-terminus: Isoleucine--tRNA ligase (938 aa).

The short motif at 58–68 (PYANGNIHIGH) is the 'HIGH' region element. E561 contacts L-isoleucyl-5'-AMP. Residues 602 to 606 (KMSKS) carry the 'KMSKS' region motif. K605 is an ATP binding site. Positions 901, 904, 921, and 924 each coordinate Zn(2+).

The protein belongs to the class-I aminoacyl-tRNA synthetase family. IleS type 1 subfamily. In terms of assembly, monomer. The cofactor is Zn(2+).

It localises to the cytoplasm. The catalysed reaction is tRNA(Ile) + L-isoleucine + ATP = L-isoleucyl-tRNA(Ile) + AMP + diphosphate. Functionally, catalyzes the attachment of isoleucine to tRNA(Ile). As IleRS can inadvertently accommodate and process structurally similar amino acids such as valine, to avoid such errors it has two additional distinct tRNA(Ile)-dependent editing activities. One activity is designated as 'pretransfer' editing and involves the hydrolysis of activated Val-AMP. The other activity is designated 'posttransfer' editing and involves deacylation of mischarged Val-tRNA(Ile). The chain is Isoleucine--tRNA ligase from Yersinia pestis bv. Antiqua (strain Angola).